The following is a 469-amino-acid chain: MSPQTETKASVGFKAGVKDYRLTYYTPDYETKDTDILAAFRVTPQPGVPAEEAGAAVAAESSTGTWTTVWTDGLTSLDRYKGRCYHIEAVVGEENQYIGYVAYPLDLFEEGSVTNMFTSIVGNVFGFKALRALRLEDLRIPPAYSKTFQGPPHGIQVERDKLNKYGRPLLGCTIKPKLGLSAKNYGRAVYECLRGGLDFTKDDENVNSQPFMRWRDRFVFCAEAIYKAQAETGEIKGHYLNATAGTCEEMIKRAVFARELGAPIVMHDYLTGGFTANTSLAHYCRDNGLLLHIHRAMHAVIDRQKNHGMHFRVLAKALRMSGGDHIHAGTVVGKLEGEREMTLGFVDLLRDDYIEKDRSRGIFFTQDWVSMPGVLPVASGGIHVWHMPALTEIFGDDSVLQFGGGTIGHPWGNAPGAVANRVALEACVQARNEGRDLAREGNEIIREASSWSPELAAACEVWKAIKFEF.

Positions 1 to 2 (MS) are excised as a propeptide. Pro3 carries the N-acetylproline modification. N6,N6,N6-trimethyllysine is present on Lys14. The substrate site is built by Asn123 and Thr173. Lys175 acts as the Proton acceptor in catalysis. Position 177 (Lys177) interacts with substrate. Residues Lys201, Asp203, and Glu204 each contribute to the Mg(2+) site. Position 201 is an N6-carboxylysine (Lys201). His294 acts as the Proton acceptor in catalysis. 3 residues coordinate substrate: Arg295, His327, and Ser379.

The protein belongs to the RuBisCO large chain family. Type I subfamily. Heterohexadecamer of 8 large chains and 8 small chains; disulfide-linked. The disulfide link is formed within the large subunit homodimers. It depends on Mg(2+) as a cofactor. Post-translationally, the disulfide bond which can form in the large chain dimeric partners within the hexadecamer appears to be associated with oxidative stress and protein turnover.

Its subcellular location is the plastid. It localises to the chloroplast. It catalyses the reaction 2 (2R)-3-phosphoglycerate + 2 H(+) = D-ribulose 1,5-bisphosphate + CO2 + H2O. The enzyme catalyses D-ribulose 1,5-bisphosphate + O2 = 2-phosphoglycolate + (2R)-3-phosphoglycerate + 2 H(+). Functionally, ruBisCO catalyzes two reactions: the carboxylation of D-ribulose 1,5-bisphosphate, the primary event in carbon dioxide fixation, as well as the oxidative fragmentation of the pentose substrate in the photorespiration process. Both reactions occur simultaneously and in competition at the same active site. This is Ribulose bisphosphate carboxylase large chain from Iris ensata (Japanese iris).